The following is a 146-amino-acid chain: Transcription initiation factor TFIID subunit 10b (146 aa).

The disordered stretch occupies residues 16-43 (GASSHGQSSGGGGGGDRDRTTPSSHLSD).

It belongs to the TAF10 family. As to quaternary structure, belongs to the TFIID complex which is composed of TATA binding protein (Tbp) and a number of TBP-associated factors (TAFs). The N-terminus interacts with the histone fold of Taf8. At embryonic stage 9, expression is seen in the mesodermal layer and midgut primordia. The mesoderm-specific expression persists in later stages of development and at its highest level is detected in midgut, hindgut, and differentiating somatic muscle fibers. Coexpressed with Taf10 in the lateral epidermis and anal plate.

The protein resides in the cytoplasm. Its subcellular location is the nucleus. Functionally, TFIID is a multimeric protein complex that plays a central role in mediating promoter responses to various activators and repressors. The polypeptide is Transcription initiation factor TFIID subunit 10b (Drosophila melanogaster (Fruit fly)).